A 190-amino-acid chain; its full sequence is MLDREGYRPNVGIILVNGKNEVFWGKRIREHAWQFPQGGIKYGESPVQAMYRELHEEVGLKPEHVRILGRTRDWLRYNVPDHFVRREWRGHYKGQKQIWFLLRLVGRDSDVCLRATQHPEFDAWRWSQYWVPLDAVIEFKRDVYTQALNELAVILFRRHHETRYLRQRVHGPRSTDNPSSETDGHAHIAG.

The region spanning 6-149 (GYRPNVGIIL…KRDVYTQALN (144 aa)) is the Nudix hydrolase domain. The Nudix box motif lies at 38–59 (GGIKYGESPVQAMYRELHEEVG). Residues 167 to 190 (QRVHGPRSTDNPSSETDGHAHIAG) form a disordered region.

It belongs to the Nudix hydrolase family. RppH subfamily. Requires a divalent metal cation as cofactor.

Its function is as follows. Accelerates the degradation of transcripts by removing pyrophosphate from the 5'-end of triphosphorylated RNA, leading to a more labile monophosphorylated state that can stimulate subsequent ribonuclease cleavage. The polypeptide is RNA pyrophosphohydrolase (Bordetella parapertussis (strain 12822 / ATCC BAA-587 / NCTC 13253)).